The primary structure comprises 362 residues: tRNA N6-adenosine threonylcarbamoyltransferase (362 aa).

Fe cation is bound by residues histidine 116 and histidine 120. Residues 138–142 (LVSGG), aspartate 171, glycine 184, and asparagine 284 each bind substrate. Fe cation is bound at residue aspartate 312.

The protein belongs to the KAE1 / TsaD family. Fe(2+) serves as cofactor.

It localises to the cytoplasm. It carries out the reaction L-threonylcarbamoyladenylate + adenosine(37) in tRNA = N(6)-L-threonylcarbamoyladenosine(37) in tRNA + AMP + H(+). In terms of biological role, required for the formation of a threonylcarbamoyl group on adenosine at position 37 (t(6)A37) in tRNAs that read codons beginning with adenine. Is involved in the transfer of the threonylcarbamoyl moiety of threonylcarbamoyl-AMP (TC-AMP) to the N6 group of A37, together with TsaE and TsaB. TsaD likely plays a direct catalytic role in this reaction. The polypeptide is tRNA N6-adenosine threonylcarbamoyltransferase (Chelativorans sp. (strain BNC1)).